A 373-amino-acid polypeptide reads, in one-letter code: Securin (373 aa).

The segment covering 1-10 (MMPANEDKEN) has biased composition (basic and acidic residues). The interval 1–27 (MMPANEDKENNIVYTGNESSGINFPQT) is disordered. Polar residues predominate over residues 12–26 (IVYTGNESSGINFPQ). Residues 85 to 88 (RLPL) carry the D-box motif. Residues 177 to 278 (ADSGKNEESS…LPYVPEGYSP (102 aa)) are disordered. A phosphoserine mark is found at S185, S186, S212, and S213. Residues 185–194 (SSDDDEGNED) show a composition bias toward acidic residues. A compositionally biased stretch (low complexity) spans 225-235 (LFNEQGGLQQL). Residues 240 to 256 (TKNEQKTKNDKSDKTDD) are compositionally biased toward basic and acidic residues. S277 carries the post-translational modification Phosphoserine. Residue S292 is modified to Phosphoserine; by CDC28.

This sequence belongs to the securin family. As to quaternary structure, interacts with the caspase-like ESP1, and prevents its protease activity probably by covering its active site. Interacts with CDC20. In terms of processing, phosphorylated by CDC28. The phosphorylation may be important for ESP1 localization to the nucleus. Post-translationally, ubiquitinated by the anaphase promoting complex (APC) at the onset of anaphase, conducting to its degradation.

The protein resides in the cytoplasm. Its subcellular location is the nucleus. In terms of biological role, regulatory protein, which plays a central role in chromosome stability. Probably acts by blocking the action of key proteins. During the mitosis, it blocks Separase/ESP1 function, preventing the proteolysis of the cohesin complex and the subsequent segregation of the chromosomes. At the onset of anaphase, it is ubiquitinated, conducting to its destruction and to the liberation of ESP1. This chain is Securin (PDS1), found in Saccharomyces cerevisiae (strain ATCC 204508 / S288c) (Baker's yeast).